The following is an 867-amino-acid chain: Pentatricopeptide repeat-containing protein At2g39230, mitochondrial (867 aa).

A mitochondrion-targeting transit peptide spans 1–49 (MTTFMVSKRFRPPIFLHRFINPKPISSQTRFLHPPDNQSRDISDSTTET). The interval 27–74 (SQTRFLHPPDNQSRDISDSTTETISTLEFPHKTSVPNHSPLTSTSETE) is disordered. The span at 60–72 (SVPNHSPLTSTSE) shows a compositional bias: polar residues. PPR repeat units follow at residues 168–202 (TPRA…KVVP), 203–237 (FVPY…GVAG), 238–272 (DNVT…GAEP), 273–307 (DGLL…LGVP), 309–343 (SQET…GIPM), 344–378 (SVIA…GLAP), 379–413 (DKVM…RIAP), 414–444 (SSVL…SFES), 448–482 (HGFM…GIEP), 483–517 (NVVF…GLEP), 518–552 (NNFT…NFEA), 553–588 (NEVI…RYSM), 589–623 (SCTS…GKSP), 624–658 (NVVT…ELKL), 659–693 (DLPA…GLMP), 694–728 (NVSV…GISC), 729–763 (DLFT…GIVP), 764–798 (DEIL…DVTP), and 799–833 (NVLL…GIVH).

It belongs to the PPR family. P subfamily. As to expression, expressed in lateral organ junctions and shoot apical meristem (SAM).

It localises to the mitochondrion. Its function is as follows. Involved in lateral organ development and boundary demarcation. This Arabidopsis thaliana (Mouse-ear cress) protein is Pentatricopeptide repeat-containing protein At2g39230, mitochondrial (LOJ).